The sequence spans 265 residues: MSGSTIIPWVVGNWKMNPKQSDAIQLVQQFKDLLKQQPISEQYCHVGVAPIAIALTTIQSELATANRQVATVAQDVSRFAGTGAYTGEISAELLTDSQIRYVLIGHSERRDLLGDHVEILKAKLSHALNAGMTVIYCVGESLEQREQGLAEQIVLQQICDIAPVVSAEQWQHQIVIAYEPIWAIGTGRTASPEDAQAIHAKIREGLCQITPAGSQIALLYGGSVKPENAVELAACPDINGALVGGASLNAESFYKIAQAFAQTQQ.

13–15 contacts substrate; it reads NWK. H106 serves as the catalytic Electrophile. E179 functions as the Proton acceptor in the catalytic mechanism. Residues G185, S223, and 244–245 each bind substrate; that span reads GG.

Belongs to the triosephosphate isomerase family. Homodimer.

It is found in the cytoplasm. It carries out the reaction D-glyceraldehyde 3-phosphate = dihydroxyacetone phosphate. It functions in the pathway carbohydrate biosynthesis; gluconeogenesis. It participates in carbohydrate degradation; glycolysis; D-glyceraldehyde 3-phosphate from glycerone phosphate: step 1/1. In terms of biological role, involved in the gluconeogenesis. Catalyzes stereospecifically the conversion of dihydroxyacetone phosphate (DHAP) to D-glyceraldehyde-3-phosphate (G3P). The polypeptide is Triosephosphate isomerase (Acinetobacter baylyi (strain ATCC 33305 / BD413 / ADP1)).